The chain runs to 316 residues: L-lactate dehydrogenase (316 aa).

Residues Val15, Asp37, Lys42, Tyr68, and 82–83 (GL) each bind NAD(+). Substrate is bound by residues Gln85, Arg91, and 123–126 (NPVD). Residues 121–123 (ASN) and Thr146 contribute to the NAD(+) site. A substrate-binding site is contributed by 151–154 (DTSR). Residues Arg156 and His171 each contribute to the beta-D-fructose 1,6-bisphosphate site. His178 functions as the Proton acceptor in the catalytic mechanism. Tyr222 carries the phosphotyrosine modification. Thr231 provides a ligand contact to substrate.

Belongs to the LDH/MDH superfamily. LDH family. In terms of assembly, homotetramer.

Its subcellular location is the cytoplasm. The catalysed reaction is (S)-lactate + NAD(+) = pyruvate + NADH + H(+). It functions in the pathway fermentation; pyruvate fermentation to lactate; (S)-lactate from pyruvate: step 1/1. With respect to regulation, allosterically activated by fructose 1,6-bisphosphate (FBP). In terms of biological role, catalyzes the conversion of lactate to pyruvate. The sequence is that of L-lactate dehydrogenase from Borrelia garinii subsp. bavariensis (strain ATCC BAA-2496 / DSM 23469 / PBi) (Borreliella bavariensis).